The following is a 1035-amino-acid chain: Glycine dehydrogenase (decarboxylating), mitochondrial (1035 aa).

Residues 1 to 64 (MERARKLANR…KSFNTQQARS (64 aa)) constitute a mitochondrion transit peptide. Position 771 is an N6-(pyridoxal phosphate)lysine (lysine 771).

The protein belongs to the GcvP family. Homodimer. The glycine cleavage system is composed of four proteins: P, T, L and H. It depends on pyridoxal 5'-phosphate as a cofactor.

The protein resides in the mitochondrion. It catalyses the reaction N(6)-[(R)-lipoyl]-L-lysyl-[glycine-cleavage complex H protein] + glycine + H(+) = N(6)-[(R)-S(8)-aminomethyldihydrolipoyl]-L-lysyl-[glycine-cleavage complex H protein] + CO2. In terms of biological role, the glycine cleavage system catalyzes the degradation of glycine. The P protein binds the alpha-amino group of glycine through its pyridoxal phosphate cofactor; CO(2) is released and the remaining methylamine moiety is then transferred to the lipoamide cofactor of the H protein. The polypeptide is Glycine dehydrogenase (decarboxylating), mitochondrial (GDCSP) (Solanum tuberosum (Potato)).